We begin with the raw amino-acid sequence, 150 residues long: Transcription antitermination protein NusB (150 aa).

Belongs to the NusB family.

Functionally, involved in transcription antitermination. Required for transcription of ribosomal RNA (rRNA) genes. Binds specifically to the boxA antiterminator sequence of the ribosomal RNA (rrn) operons. The polypeptide is Transcription antitermination protein NusB (Streptococcus pyogenes serotype M2 (strain MGAS10270)).